We begin with the raw amino-acid sequence, 388 residues long: Succinate--CoA ligase [ADP-forming] subunit beta (388 aa).

One can recognise an ATP-grasp domain in the interval 9-244; sequence KQLFAEYGLP…PSQEDEREAH (236 aa). ATP-binding positions include lysine 46, 53-55, glutamate 99, serine 102, and glutamate 107; that span reads GRG. Mg(2+) contacts are provided by asparagine 199 and aspartate 213. Substrate contacts are provided by residues asparagine 264 and 321–323; that span reads GIV.

It belongs to the succinate/malate CoA ligase beta subunit family. As to quaternary structure, heterotetramer of two alpha and two beta subunits. Mg(2+) serves as cofactor.

The catalysed reaction is succinate + ATP + CoA = succinyl-CoA + ADP + phosphate. It catalyses the reaction GTP + succinate + CoA = succinyl-CoA + GDP + phosphate. It functions in the pathway carbohydrate metabolism; tricarboxylic acid cycle; succinate from succinyl-CoA (ligase route): step 1/1. Its function is as follows. Succinyl-CoA synthetase functions in the citric acid cycle (TCA), coupling the hydrolysis of succinyl-CoA to the synthesis of either ATP or GTP and thus represents the only step of substrate-level phosphorylation in the TCA. The beta subunit provides nucleotide specificity of the enzyme and binds the substrate succinate, while the binding sites for coenzyme A and phosphate are found in the alpha subunit. The protein is Succinate--CoA ligase [ADP-forming] subunit beta of Aliivibrio salmonicida (strain LFI1238) (Vibrio salmonicida (strain LFI1238)).